A 541-amino-acid chain; its full sequence is MASSGGGNTGAGGTSGLGLGLGLGLCMGEATGDAEEEAAAAEAVGRLATSLWLRLRGWEAVLAAAQRLLVWEKPLHSLVTAATLNGLFWLLSSSSLRPFFLLSISLLTYFLLDLWHPRFLPDVSAPPPEEPHSDSEGAGSGAQPHLLSVPELCRYLAESWLTFQIHLQELLQYKRQNPAQFCARVCSGCAVLAVLGHYVPGIMISYIVLLSILLWPLVVYHELIQRMYTRLEPLLMQLDYSMKAEADALHHKHDKRKRQGKNAPPAGDEPLAETESESEAELAGFSPVVDVKKTALALAITDSELSDEEASILESGGFSVSRATTPQLTDVSEDLDQQSLPSEPEEALSRELGDGEETELAPPEDLLSAPPALSKQALDTEEEGAADKETLLQLSSPLHFVNTHFNGAGSPQEGVKCPPGGPVETLSPEAVSGDLMAPSSTLSPQLCLAESGPVTLLSPSVLPSLPQDSPQALTAPEEEEALTTEDFELLDQGELEQLNAELGLGPEMPPKPPDVLPPPPLGPDSHSLVQSDQEAHAVVEP.

The next 3 membrane-spanning stretches (helical) occupy residues 75-91 (LHSL…FWLL), 99-115 (FFLL…LDLW), and 199-219 (VPGI…PLVV). Residues 249–282 (LHHKHDKRKRQGKNAPPAGDEPLAETESESEAEL) form a disordered region. The span at 250–260 (HHKHDKRKRQG) shows a compositional bias: basic residues. A compositionally biased stretch (acidic residues) spans 270–280 (PLAETESESEA). Thr274 carries the phosphothreonine modification. Phosphoserine occurs at positions 276, 278, 286, and 306. Thr329 bears the Phosphothreonine mark. 3 disordered regions span residues 331-389 (VSED…ADKE), 403-440 (THFN…APSS), and 459-481 (PSVL…EEEA). Phosphoserine is present on residues Ser332, Ser339, and Ser342. A compositionally biased stretch (low complexity) spans 459 to 475 (PSVLPSLPQDSPQALTA). The LIR motif motif lies at 485-490 (EDFELL). Residues 496–541 (EQLNAELGLGPEMPPKPPDVLPPPPLGPDSHSLVQSDQEAHAVVEP) form a disordered region. Residues 507 to 522 (EMPPKPPDVLPPPPLG) are compositionally biased toward pro residues.

It belongs to the RETREG family. As to quaternary structure, interacts with ATG8 family modifier proteins MAP1LC3A, MAP1LC3B, GABARAP, GABARAPL1 and GABARAPL2. Interacts with CANX.

The protein localises to the endoplasmic reticulum membrane. Functionally, endoplasmic reticulum (ER)-anchored autophagy regulator which exists in an inactive state under basal conditions but is activated following cellular stress. When activated, induces ER fragmentation and mediates ER delivery into lysosomes through sequestration into autophagosomes via interaction with ATG8 family proteins. Required for collagen quality control in a LIR motif-independent manner. In Rattus norvegicus (Rat), this protein is Reticulophagy regulator 2 (Retreg2).